The following is a 576-amino-acid chain: G protein-coupled receptor kinase 6 (576 aa).

The interval 1-185 is N-terminal; it reads MELENIVANT…LERQPVTKNT (185 aa). Residues 53–171 enclose the RGS domain; that stretch reads YHSLCERQPI…LDSIYFNRFL (119 aa). One can recognise a Protein kinase domain in the interval 186–448; sequence FRQYRVLGKG…AREVKEHPLF (263 aa). Residues 192 to 200, K215, and 264 to 270 each bind ATP; these read LGKGGFGEV and TLMNGGD. Residue D311 is the Proton acceptor of the active site. ATP is bound at residue 315 to 318; sequence ENIL. Positions 449 to 514 constitute an AGC-kinase C-terminal domain; it reads KKLNFKRLGA…GSVSIPWQNE (66 aa). The residue at position 484 (S484) is a Phosphoserine. A Phosphothreonine modification is found at T485. S-palmitoyl cysteine attachment occurs at residues C561, C562, and C565. S566 and S568 each carry phosphoserine.

This sequence belongs to the protein kinase superfamily. AGC Ser/Thr protein kinase family. GPRK subfamily. In terms of assembly, interacts with GIT1. As to expression, expressed in the brain in striatal neurons.

Its subcellular location is the membrane. It carries out the reaction [G-protein-coupled receptor] + ATP = [G-protein-coupled receptor]-phosphate + ADP + H(+). Its function is as follows. Specifically phosphorylates the activated forms of G protein-coupled receptors. Such receptor phosphorylation initiates beta-arrestin-mediated receptor desensitization, internalization, and signaling events leading to their desensitization. Seems to be involved in the desensitization of D2-like dopamine receptors in striatum and chemokine receptor CXCR4 which is critical for CXCL12-induced cell chemotaxis. Phosphorylates rhodopsin (RHO) (in vitro) and a non G-protein-coupled receptor, LRP6 during Wnt signaling (in vitro). This is G protein-coupled receptor kinase 6 (Grk6) from Mus musculus (Mouse).